Here is a 444-residue protein sequence, read N- to C-terminus: S-locus-specific glycoprotein BS29-1 (444 aa).

Positions methionine 1–serine 28 are cleaved as a signal peptide. One can recognise a Bulb-type lectin domain in the interval threonine 31 to tryptophan 159. 5 N-linked (GlcNAc...) asparagine glycosylation sites follow: asparagine 43, asparagine 125, asparagine 180, asparagine 243, and asparagine 396. One can recognise a PAN domain in the interval cysteine 356–alanine 437. Intrachain disulfides connect cysteine 387–cysteine 412 and cysteine 395–cysteine 397.

Stigma.

Its function is as follows. Involved in sporophytic self-incompatibility system (the inability of flowering plants to achieve self-fertilization). The sequence is that of S-locus-specific glycoprotein BS29-1 (SLSG) from Brassica oleracea var. alboglabra (Chinese kale).